Here is a 344-residue protein sequence, read N- to C-terminus: Heat-inducible transcription repressor HrcA (344 aa).

The protein belongs to the HrcA family.

Its function is as follows. Negative regulator of class I heat shock genes (grpE-dnaK-dnaJ and groELS operons). Prevents heat-shock induction of these operons. This chain is Heat-inducible transcription repressor HrcA, found in Streptococcus uberis (strain ATCC BAA-854 / 0140J).